The following is a 276-amino-acid chain: Transport and Golgi organization protein 2 homolog (276 aa).

This sequence belongs to the Tango2 family.

It is found in the cytoplasm. It localises to the mitochondrion. The protein localises to the golgi apparatus. Its function is as follows. May be involved in lipid homeostasis. The protein is Transport and Golgi organization protein 2 homolog (TANGO2) of Homo sapiens (Human).